Here is a 1136-residue protein sequence, read N- to C-terminus: DNA-directed RNA polymerase I subunit RPA2 (1136 aa).

The interval 1–24 (MDPGSRWRNLPSGPSLKHLTDPSY) is disordered. Residue Arg-180 coordinates RNA. Residues 194–208 (VRPKWKTRGPGYTHY) are loop B. The segment at 236–247 (LNFIYRKELFFL) is loop A. Asp-367 contributes to the RNA binding site. 2 fork loop regions span residues 439 to 453 (LRSK…DSGL) and 474 to 489 (RGAD…VRRL). Lys-890 is a binding site for RNA. Arg-1020 and Arg-1036 together coordinate DNA. The residue at position 1051 (Ser-1051) is a Phosphoserine. Residues Cys-1071, Cys-1074, Cys-1099, and Cys-1102 each coordinate Zn(2+). The segment at 1071–1102 (CVKCGSLLSPLLEKPPPSWSAMRNRKYNCTLC) adopts a C4-type zinc-finger fold.

This sequence belongs to the RNA polymerase beta chain family. Component of the RNA polymerase I (Pol I) complex consisting of 13 subunits: a ten-subunit catalytic core composed of POLR1A/RPA1, POLR1B/RPA2, POLR1C/RPAC1, POLR1D/RPAC2, POLR1H/RPA12, POLR2E/RPABC1, POLR2F/RPABC2, POLR2H/RPABC3, POLR2K/RPABC4 and POLR2L/RPABC5; a mobile stalk subunit POLR1F/RPA43 protruding from the core and additional subunits homologous to general transcription factors POLR1E/RPA49 and POLR1G/RPA34. Part of Pol I pre-initiation complex (PIC), in which Pol I core assembles with RRN3 and promoter-bound UTBF and SL1/TIF-IB complex.

It is found in the nucleus. The protein localises to the nucleolus. It localises to the chromosome. The enzyme catalyses RNA(n) + a ribonucleoside 5'-triphosphate = RNA(n+1) + diphosphate. Functionally, catalytic core component of RNA polymerase I (Pol I), a DNA-dependent RNA polymerase which synthesizes ribosomal RNA precursors using the four ribonucleoside triphosphates as substrates. Transcribes 47S pre-rRNAs from multicopy rRNA gene clusters, giving rise to 5.8S, 18S and 28S ribosomal RNAs. Pol I-mediated transcription cycle proceeds through transcription initiation, transcription elongation and transcription termination stages. During transcription initiation, Pol I pre-initiation complex (PIC) is recruited by the selectivity factor 1 (SL1/TIF-IB) complex bound to the core promoter that precedes an rDNA repeat unit. The PIC assembly bends the promoter favoring the formation of the transcription bubble and promoter escape. Once the polymerase has escaped from the promoter it enters the elongation phase during which RNA is actively polymerized, based on complementarity with the template DNA strand. Highly processive, assembles in structures referred to as 'Miller trees' where many elongating Pol I complexes queue and transcribe the same rDNA coding regions. At terminator sequences downstream of the rDNA gene, PTRF interacts with Pol I and halts Pol I transcription leading to the release of the RNA transcript and polymerase from the DNA. Forms Pol I active center together with the largest subunit POLR1A/RPA1. Appends one nucleotide at a time to the 3' end of the nascent RNA, with POLR1A/RPA1 contributing a Mg(2+)-coordinating DxDGD motif, and POLR1B/RPA2 providing lysine residues believed to facilitate Watson-Crick base pairing between the incoming nucleotide and the template base. Typically, Mg(2+) ions direct a 5' nucleoside triphosphate to form a phosphodiester bond with the 3' hydroxyl of the preceding nucleotide of the nascent RNA, with the elimination of pyrophosphate. Has proofreading activity: Pauses and backtracks to allow the cleavage of a missincorporated nucleotide via POLR1H/RPA12. High Pol I processivity is associated with decreased transcription fidelity. This is DNA-directed RNA polymerase I subunit RPA2 (POLR1B) from Pongo abelii (Sumatran orangutan).